Reading from the N-terminus, the 481-residue chain is Aspartyl/glutamyl-tRNA(Asn/Gln) amidotransferase subunit B (481 aa).

Belongs to the GatB/GatE family. GatB subfamily. As to quaternary structure, heterotrimer of A, B and C subunits.

It catalyses the reaction L-glutamyl-tRNA(Gln) + L-glutamine + ATP + H2O = L-glutaminyl-tRNA(Gln) + L-glutamate + ADP + phosphate + H(+). The catalysed reaction is L-aspartyl-tRNA(Asn) + L-glutamine + ATP + H2O = L-asparaginyl-tRNA(Asn) + L-glutamate + ADP + phosphate + 2 H(+). Allows the formation of correctly charged Asn-tRNA(Asn) or Gln-tRNA(Gln) through the transamidation of misacylated Asp-tRNA(Asn) or Glu-tRNA(Gln) in organisms which lack either or both of asparaginyl-tRNA or glutaminyl-tRNA synthetases. The reaction takes place in the presence of glutamine and ATP through an activated phospho-Asp-tRNA(Asn) or phospho-Glu-tRNA(Gln). The protein is Aspartyl/glutamyl-tRNA(Asn/Gln) amidotransferase subunit B of Ehrlichia chaffeensis (strain ATCC CRL-10679 / Arkansas).